Here is a 364-residue protein sequence, read N- to C-terminus: Protein leg1b (364 aa).

An N-terminal signal peptide occupies residues 1-22; sequence MSEMGFLRSVAAVLLLAVFSHA. Asn70 carries N-linked (GlcNAc...) asparagine glycosylation.

It belongs to the LEG1 family. As to expression, detected in all tissues tested, with the highest levels in serum (at protein level). At mRNA level, only expressed in liver.

The protein resides in the secreted. Functionally, involved in early development of liver, exocrine pancreas and intestine, probably through cell cycle regulation. In liver, its function is partially redundant with leg1a function. This chain is Protein leg1b, found in Danio rerio (Zebrafish).